Reading from the N-terminus, the 534-residue chain is Protein tweety homolog 2 (534 aa).

The Extracellular portion of the chain corresponds to 1–44 (MATARVEYIAPWWVYWLHNLPHVDFSLQRESGDFNPKDPGYQQT). Residues 45 to 65 (LLFVALFIALCAAVNLLFVSG) traverse the membrane as a helical segment. Topologically, residues 66 to 87 (YLICLCCCKKEDETETKMTSSC) are cytoplasmic. A helical membrane pass occupies residues 88–108 (CVTWTAAVSGLLCCAAVGIGF). Residues 109 to 213 (YGNSETNDGV…NASIIEYYRW (105 aa)) lie on the Extracellular side of the membrane. Glu-113 and Asp-116 together coordinate Ca(2+). Asn-129 is a glycosylation site (N-linked (GlcNAc...) asparagine). The RGD motif lies at 164-166 (RGD). Residues Asn-197 and Asn-204 are each glycosylated (N-linked (GlcNAc...) asparagine). A helical membrane pass occupies residues 214–234 (LSYLILFITDVVICLVTCLGL). The Cytoplasmic portion of the chain corresponds to 235 to 240 (AKKSKC). A helical membrane pass occupies residues 241–261 (LLLTMLCCGLIALMLSWASLA). Over 262-388 (LETSSAVGTS…IGICYDGVEG (127 aa)) the chain is Extracellular. Intrachain disulfides connect Cys-274–Cys-382 and Cys-300–Cys-367. A glycan (N-linked (GlcNAc...) asparagine) is linked at Asn-352. The chain crosses the membrane as a helical span at residues 389-409 (LLYLSLFSLLAAVAFTAMVCA). Residues 410-534 (MPRAWKHLAA…PNIYSNVFPA (125 aa)) are Cytoplasmic-facing.

It belongs to the tweety family. In terms of assembly, forms cis-homodimers in the presence of Ca(+2) and forms monomers and trans-dimers in the absence of Ca(2+).

It is found in the cell membrane. The catalysed reaction is chloride(in) = chloride(out). It catalyses the reaction L-glutamate(out) = L-glutamate(in). In terms of biological role, may act as a calcium-independent, swelling-dependent volume-regulated anion channel (VRAC-swell) which plays a pivotal role in the process of regulatory volume decrease (RVD) in the brain through the efflux of anions like chloride and organic osmolytes like glutamate. Probable large-conductance Ca(2+)-activated chloride channel. The protein is Protein tweety homolog 2 (ttyh2) of Xenopus laevis (African clawed frog).